The chain runs to 80 residues: Metallothionein-like protein 2B (80 aa).

Belongs to the metallothionein superfamily. Type 15 family. Highly expressed in stems. Expressed in leaves and rachis.

Metallothioneins have a high content of cysteine residues that bind various heavy metals. The protein is Metallothionein-like protein 2B (MT2B) of Oryza sativa subsp. japonica (Rice).